The primary structure comprises 237 residues: UPF0173 metal-dependent hydrolase BCAN_B0597 (237 aa).

This sequence belongs to the UPF0173 family.

The polypeptide is UPF0173 metal-dependent hydrolase BCAN_B0597 (Brucella canis (strain ATCC 23365 / NCTC 10854 / RM-666)).